The primary structure comprises 472 residues: Transmembrane protein 8B (472 aa).

Low complexity predominate over residues 1–10 (MNMPQSLGTQ). The tract at residues 1–24 (MNMPQSLGTQPLPPEPPSLGTPIE) is disordered. At 1–233 (MNMPQSLGTQ…ADALTYGFQL (233 aa)) the chain is on the extracellular side. N-linked (GlcNAc...) asparagine glycosylation is present at asparagine 100. Positions 182-221 (FLSPCVDDCGPYGQCKLLRTHNYLYAACECKAGWRGWGCT) constitute an EGF-like domain. Disulfide bonds link cysteine 186–cysteine 196, cysteine 190–cysteine 209, and cysteine 211–cysteine 220. A helical transmembrane segment spans residues 234–254 (LSTLLLCLSNLMFLPPVVLAI). Topologically, residues 255–257 (RSR) are cytoplasmic. A helical transmembrane segment spans residues 258–277 (YVLEAAVYTFTMFFSTFYHA). Over 278–292 (CDQPGIVVFCIMDYD) the chain is Extracellular. A helical transmembrane segment spans residues 293-313 (VLQFCDFLGSLMSVWVTVIAM). Over 314–315 (AR) the chain is Cytoplasmic. The chain crosses the membrane as a helical span at residues 316–336 (LQPVIKQVLYLLGAMLLSMAL). The Extracellular segment spans residues 337–342 (QLDRHG). Residues 343 to 363 (LWNLLGPSLFALGILATAWTV) traverse the membrane as a helical segment. Residues 364–379 (RSVRRRHCYPPTWRRW) are Cytoplasmic-facing. Residues 380 to 400 (LFYLCPGSLIAGSAVLLYAFV) form a helical membrane-spanning segment. Residues 401 to 405 (ETRDN) are Extracellular-facing. A helical transmembrane segment spans residues 406–426 (YFYIHSIWHMLIAGSVGFLLP). The Cytoplasmic portion of the chain corresponds to 427-472 (PRAKTDRRVPSGARARGCGYQLCINEQEELGLVGPGGTTVSSICVS).

This sequence belongs to the TMEM8 family. In terms of assembly, may interact with EZR. Post-translationally, N-glycosylated.

The protein resides in the cell membrane. The protein localises to the cytoplasm. It localises to the nucleus. Its subcellular location is the mitochondrion. It is found in the endoplasmic reticulum. Its function is as follows. May function as a regulator of the EGFR pathway. Probable tumor suppressor which may function in cell growth, proliferation and adhesion. This Mus musculus (Mouse) protein is Transmembrane protein 8B (Tmem8b).